The sequence spans 152 residues: Troponin C (152 aa).

T1 carries the N-acetylthreonine modification. 4 consecutive EF-hand domains span residues 9-44 (KQIL…LGLL), 45-80 (VKDD…KLKE), 82-117 (LDER…LGDE), and 118-152 (LTEE…SSDA). Residues D131, D133, S135, T137, and E142 each coordinate Ca(2+).

It belongs to the troponin C family.

In terms of biological role, troponin is the central regulatory protein of striated muscle contraction. Tn consists of three components: Tn-I which is the inhibitor of actomyosin ATPase, Tn-T which contains the binding site for tropomyosin and Tn-C. The binding of calcium to Tn-C abolishes the inhibitory action of Tn on actin filaments. The polypeptide is Troponin C (Mizuhopecten yessoensis (Japanese scallop)).